The primary structure comprises 262 residues: uncharacterized protein (262 aa).

Helical transmembrane passes span 42 to 62, 71 to 91, 115 to 135, 145 to 165, 185 to 205, 206 to 226, and 235 to 255; these read IAKF…TVLN, IINI…LLYF, IGLA…MELI, VVSY…CCFN, LWAY…YSNH, PLMI…PFMI, and AYPS…NYAI.

The protein resides in the membrane. This is an uncharacterized protein from Acanthamoeba polyphaga mimivirus (APMV).